The sequence spans 77 residues: Acyl carrier protein (77 aa).

Residues 2–77 (STVEERVKKI…DAIDYILANQ (76 aa)) enclose the Carrier domain. Position 37 is an O-(pantetheine 4'-phosphoryl)serine (Ser37).

Belongs to the acyl carrier protein (ACP) family. Post-translationally, 4'-phosphopantetheine is transferred from CoA to a specific serine of apo-ACP by AcpS. This modification is essential for activity because fatty acids are bound in thioester linkage to the sulfhydryl of the prosthetic group.

It localises to the cytoplasm. It functions in the pathway lipid metabolism; fatty acid biosynthesis. In terms of biological role, carrier of the growing fatty acid chain in fatty acid biosynthesis. The chain is Acyl carrier protein from Hahella chejuensis (strain KCTC 2396).